A 1261-amino-acid chain; its full sequence is Structural maintenance of chromosomes protein 3 (1261 aa).

Coiled coils occupy residues 188 to 332 (EKIQ…HSLQ) and 406 to 450 (LIAD…YEMD). Residues 534 to 645 (NGYYGTVIEL…IIVRTLDQAA (112 aa)) enclose the SMC hinge domain. Coiled coils occupy residues 677 to 826 (KRSK…MDLM), 857 to 930 (NERR…DKIT), and 1023 to 1085 (RELE…ENRK). The short motif at 1159 to 1193 (LSGGQKSLVALAIIFSIQKCDPAPFYLFDEIDAAL) is the DA-box element.

Belongs to the SMC family. SMC3 subfamily. As to quaternary structure, component of the cohesin complex, composed of the smc-1 and smc-3 heterodimer attached via their SMC hinge domain, scc-1 which links them, and scc-3. Interacts with scc-1, smc-1 and tim-1.

It localises to the nucleus. Its subcellular location is the chromosome. Involved in chromosome cohesion during cell cycle and in DNA repair. Involved in the repair of double strand breaks during mitosis and meiosis. Required for chromosome segregation during mitosis. Central component of cohesin complex. The cohesin complex is required for the cohesion of sister chromatids after DNA replication. The cohesin complex apparently forms a large proteinaceous ring within which sister chromatids can be trapped. At anaphase, the complex is cleaved and dissociates from chromatin, allowing sister chromatids to segregate. Required for the localization of lab-1 to meiotic and mitotic chromosomes. The sequence is that of Structural maintenance of chromosomes protein 3 from Caenorhabditis elegans.